The chain runs to 214 residues: Adenylate kinase (214 aa).

10 to 15 (GAGKGT) serves as a coordination point for ATP. The tract at residues 30–59 (STGDMLRAAIKAGTELGKQAKAVIDAGQLV) is NMP. AMP is bound by residues T31, R36, 57–59 (QLV), 85–88 (GFPR), and Q92. The interval 122 to 159 (GRRAHLPSGRTYHVVYNPPKVEGKDDVTGEDLVIREDD) is LID. ATP-binding positions include R123 and 132-133 (TY). AMP is bound by residues R156 and R167. K200 is an ATP binding site.

Belongs to the adenylate kinase family. In terms of assembly, monomer.

It is found in the cytoplasm. It catalyses the reaction AMP + ATP = 2 ADP. Its pathway is purine metabolism; AMP biosynthesis via salvage pathway; AMP from ADP: step 1/1. Catalyzes the reversible transfer of the terminal phosphate group between ATP and AMP. Plays an important role in cellular energy homeostasis and in adenine nucleotide metabolism. This is Adenylate kinase from Vibrio cholerae serotype O1 (strain ATCC 39541 / Classical Ogawa 395 / O395).